The primary structure comprises 295 residues: GTP-binding protein GEM (295 aa).

Residues 39–64 (CNLRNRHSTAPEEHCRRSWSSDSTDS) form a disordered region. GTP contacts are provided by residues 81-88 (GEQGVGKS) and 190-193 (NKSD). Residues 265-284 (ARRFWGKIVAKNNKNMAFKL) form a calmodulin-binding region.

Belongs to the small GTPase superfamily. RGK family. Interacts with calmodulin in a Ca(2+)-dependent manner. Calmodulin binding significantly decreases GTP binding. Binds ROCK1. Phosphorylated on tyrosine residues.

It is found in the cell membrane. Could be a regulatory protein, possibly participating in receptor-mediated signal transduction at the plasma membrane. Has guanine nucleotide-binding activity but undetectable intrinsic GTPase activity. In Mus musculus (Mouse), this protein is GTP-binding protein GEM (Gem).